Here is a 609-residue protein sequence, read N- to C-terminus: Chaperone protein DnaK (609 aa).

Thr-173 carries the post-translational modification Phosphothreonine; by autocatalysis. The segment at 580-609 is disordered; the sequence is QAAQGGGAEGQEPKKDNVVDADYEVVDDKK. Residues 598-609 are compositionally biased toward acidic residues; it reads VDADYEVVDDKK.

Belongs to the heat shock protein 70 family.

Its function is as follows. Acts as a chaperone. The polypeptide is Chaperone protein DnaK (Brevibacillus brevis (strain 47 / JCM 6285 / NBRC 100599)).